The primary structure comprises 668 residues: MKGKTMIDRKEDNQFHLVSKYEPSGDQPQAIETLVDNIKGGEKAQILKGATGTGKTYTMSQVIQRVNKPTLVIAHNKTLAGQLYGEFKEFFPDNAVEYFVSYYDYYQPEAYVPSSDTYIEKDSSINDEIDKLRHSATSALLERNDVIVVASVSCIYGLGSPKEYADSAVSLRPGQEISRDKLLNDLVDIQFERNDIDFQRGKFRVRGDVVEIFPASRDENAFRVEFFGDEIDRICEIESLTGRNLGEVEHLVLFPATHFMTNEEHMEEAIKNIMEEMEVQVNQFEAEGKLIEAQRIRQRTEYDVEMLREMGYTNGIENYSRHMDGRKEGEPPFTLLDFFPEDFLIMIDESHMTMGQIKGMYNGDQARKKMLVDYGFRLPSALDNRPLRREEFESHVHQIVYVSATPGDYEMEQTETVVEQIIRPTGLLDPEVEVRPTMGQMDDLLGEINARTEKGERVFVTTLTKKMAEDLTDYLKEMGVKVKYMHSDIKTLERTEIIRDLRLGVFDVLIGINLLREGIDVPEVSLVAILDADKEGFLRNERGLIQTIGRAARNSDGHVIMYADKITESMQKAMDETARRREIQMAYNKEHGITPQTIKKEIRDLISITKTNEAEVAEDTVNYSAMNKKERQEAIKKLQKQMHEAAELLDFELAAQIRDMVLELKSMD.

The 388-residue stretch at 36 to 423 (DNIKGGEKAQ…TETVVEQIIR (388 aa)) folds into the Helicase ATP-binding domain. Position 49 to 56 (49 to 56 (GATGTGKT)) interacts with ATP. The short motif at 102 to 125 (YYDYYQPEAYVPSSDTYIEKDSSI) is the Beta-hairpin element. Residues 440–606 (QMDDLLGEIN…TIKKEIRDLI (167 aa)) form the Helicase C-terminal domain. Positions 632–667 (QEAIKKLQKQMHEAAELLDFELAAQIRDMVLELKSM) constitute a UVR domain.

It belongs to the UvrB family. Forms a heterotetramer with UvrA during the search for lesions. Interacts with UvrC in an incision complex.

The protein localises to the cytoplasm. Its function is as follows. The UvrABC repair system catalyzes the recognition and processing of DNA lesions. A damage recognition complex composed of 2 UvrA and 2 UvrB subunits scans DNA for abnormalities. Upon binding of the UvrA(2)B(2) complex to a putative damaged site, the DNA wraps around one UvrB monomer. DNA wrap is dependent on ATP binding by UvrB and probably causes local melting of the DNA helix, facilitating insertion of UvrB beta-hairpin between the DNA strands. Then UvrB probes one DNA strand for the presence of a lesion. If a lesion is found the UvrA subunits dissociate and the UvrB-DNA preincision complex is formed. This complex is subsequently bound by UvrC and the second UvrB is released. If no lesion is found, the DNA wraps around the other UvrB subunit that will check the other stand for damage. The polypeptide is UvrABC system protein B (Streptococcus thermophilus (strain CNRZ 1066)).